Reading from the N-terminus, the 320-residue chain is MRLGPRPAVLGLLLLLLLYAAVAGASKAEELHYPQGEHRADYDRETLLGVQEDVDEYVKLGHEEQQRRLQSIIKKIDSDSDGFLTENELSQWIQMSFKHYAMQEAKQQFVEYDKNSDGTVTWDEYNVQMYDRVIDFDENTALDDTEEESFRQLHLKDKKRFEKANQDSGPGLNLEEFIAFEHPEEVDYMTEFVIQEALEEHDKNGDGFVSLEEFLGDYRRDPTANEDPEWILVEKDRFVNDYDKDSDGRLDPQELLSWVVPNNQGIAQEEALHLIDEMDLNSDKKLSEEEILENQDLFLTSEATDYGRQLHDDYFYHDEL.

Residues 1 to 25 form the signal peptide; the sequence is MRLGPRPAVLGLLLLLLLYAAVAGA. EF-hand domains follow at residues 64-99 and 100-135; these read EQQRRLQSIIKKIDSDSDGFLTENELSQWIQMSFKH and YAMQEAKQQFVEYDKNSDGTVTWDEYNVQMYDRVID. Residues D77, D79, D81, E88, D113, N115, D117, T119, and E124 each coordinate Ca(2+). T140 carries the post-translational modification Phosphothreonine. EF-hand domains follow at residues 150 to 185, 189 to 224, 230 to 265, and 266 to 301; these read FRQLHLKDKKRFEKANQDSGPGLNLEEFIAFEHPEE, MTEFVIQEALEEHDKNGDGFVSLEEFLGDYRRDPTA, WILVEKDRFVNDYDKDSDGRLDPQELLSWVVPNNQG, and IAQEEALHLIDEMDLNSDKKLSEEEILENQDLFLTS. 16 residues coordinate Ca(2+): D167, E176, D202, N204, D206, E213, D243, D245, D247, R249, E254, D279, N281, D283, K285, and E290. The Prevents secretion from ER motif lies at 317 to 320; the sequence is HDEL.

The protein belongs to the CREC family. As to quaternary structure, binds the snake venom phospholipase complex taipoxin. In terms of tissue distribution, ubiquitous.

The protein resides in the endoplasmic reticulum lumen. Its function is as follows. Not known. Binds calcium. The protein is Reticulocalbin-2 (Rcn2) of Rattus norvegicus (Rat).